The sequence spans 784 residues: DNA repair and recombination protein RAD54-like (784 aa).

The segment at 2–9 (RRSLAPSQ) is required for chromatin remodeling, strand pairing activities and coupling of ATPase activity. At T22 the chain carries Phosphothreonine. The 176-residue stretch at 169 to 344 (EGKKGNFNGC…FSLVNFVNPE (176 aa)) folds into the Helicase ATP-binding domain. ATP is bound at residue 182–189 (DEMGLGKT). The DEGH box signature appears at 295–298 (DEGH). In terms of domain architecture, Helicase C-terminal spans 501–658 (LLDFMLATIR…NNESAEKHFT (158 aa)). The disordered stretch occupies residues 742-784 (QAIKESEETKQEAEDTSIPAKSKRKRSTTPESDDCNDEDFKGF). Basic and acidic residues predominate over residues 745 to 754 (KESEETKQEA).

It belongs to the SNF2/RAD54 helicase family. Interacts (via N-terminus) with spn-A/Rad51.

Its subcellular location is the nucleus. Its function is as follows. Involved in mitotic DNA repair and meiotic recombination. Functions in the recombinational DNA repair pathway. Essential for interhomolog gene conversion (GC), but may have a less important role in intersister GC than spn-A/Rad51. In the presence of DNA, spn-A/Rad51 enhances the ATPase activity of okr/Rad54. In Drosophila willistoni (Fruit fly), this protein is DNA repair and recombination protein RAD54-like.